The primary structure comprises 315 residues: DNA-directed RNA polymerase subunit alpha (315 aa).

Positions 1–228 (MLEIEKPKIE…EHFKLFMTLT (228 aa)) are alpha N-terminal domain (alpha-NTD). Residues 245-315 (KEKVLEMAIE…LGLSLKQNED (71 aa)) form an alpha C-terminal domain (alpha-CTD) region.

The protein belongs to the RNA polymerase alpha chain family. Homodimer. The RNAP catalytic core consists of 2 alpha, 1 beta, 1 beta' and 1 omega subunit. When a sigma factor is associated with the core the holoenzyme is formed, which can initiate transcription.

It carries out the reaction RNA(n) + a ribonucleoside 5'-triphosphate = RNA(n+1) + diphosphate. DNA-dependent RNA polymerase catalyzes the transcription of DNA into RNA using the four ribonucleoside triphosphates as substrates. This is DNA-directed RNA polymerase subunit alpha from Clostridium kluyveri (strain NBRC 12016).